The primary structure comprises 951 residues: Glycine dehydrogenase (decarboxylating) 1 (951 aa).

The residue at position 703 (K703) is an N6-(pyridoxal phosphate)lysine.

This sequence belongs to the GcvP family. The glycine cleavage system is composed of four proteins: P, T, L and H. The cofactor is pyridoxal 5'-phosphate.

The catalysed reaction is N(6)-[(R)-lipoyl]-L-lysyl-[glycine-cleavage complex H protein] + glycine + H(+) = N(6)-[(R)-S(8)-aminomethyldihydrolipoyl]-L-lysyl-[glycine-cleavage complex H protein] + CO2. Functionally, the glycine cleavage system catalyzes the degradation of glycine. The P protein binds the alpha-amino group of glycine through its pyridoxal phosphate cofactor; CO(2) is released and the remaining methylamine moiety is then transferred to the lipoamide cofactor of the H protein. The sequence is that of Glycine dehydrogenase (decarboxylating) 1 from Pseudomonas fluorescens (strain ATCC BAA-477 / NRRL B-23932 / Pf-5).